We begin with the raw amino-acid sequence, 340 residues long: N(4)-(Beta-N-acetylglucosaminyl)-L-asparaginase (340 aa).

The N-terminal stretch at 1–45 is a signal peptide; the sequence is MRIIYKQQTMNNNRRDFIKKLGIATAAIAINPLEAKNLLDTSEPK. Residue threonine 197 is the Nucleophile of the active site. Substrate contacts are provided by residues 225 to 228 and 248 to 251; these read RVGD and TGHG.

The protein belongs to the Ntn-hydrolase family. As to quaternary structure, heterotetramer of two alpha and two beta chains arranged as a dimer of alpha/beta heterodimers. Post-translationally, cleaved into an alpha and beta chain by autocatalysis; this activates the enzyme. The N-terminal residue of the beta subunit is responsible for the nucleophile hydrolase activity.

It is found in the periplasm. The enzyme catalyses N(4)-(beta-N-acetyl-D-glucosaminyl)-L-asparagine + H2O = N-acetyl-beta-D-glucosaminylamine + L-aspartate + H(+). Cleaves the GlcNAc-Asn bond which joins oligosaccharides to the peptide of asparagine-linked glycoproteins. Requires that the glycosylated asparagine moiety is not substituted on its N-(R1) and C- (R2) terminus. This Elizabethkingia miricola (Chryseobacterium miricola) protein is N(4)-(Beta-N-acetylglucosaminyl)-L-asparaginase.